Consider the following 767-residue polypeptide: 5-methyltetrahydropteroyltriglutamate--homocysteine methyltransferase (767 aa).

Lys-19 contributes to the 5-methyltetrahydropteroyltri-L-glutamate binding site. Ser-89 bears the Phosphoserine mark. Residue Asn-126 participates in 5-methyltetrahydropteroyltri-L-glutamate binding. Ser-242 is modified (phosphoserine). Residues 444–446 (IGS) and Glu-497 contribute to the L-homocysteine site. L-methionine-binding positions include 444-446 (IGS) and Glu-497. 5-methyltetrahydropteroyltri-L-glutamate is bound by residues Asp-502, Tyr-525, and 528–529 (RY). Thr-566 carries the post-translational modification Phosphothreonine. Trp-574 contacts 5-methyltetrahydropteroyltri-L-glutamate. L-homocysteine is bound at residue Asp-612. Asp-612 lines the L-methionine pocket. A Phosphoserine modification is found at Ser-629. The Zn(2+) site is built by His-655, Cys-657, and Glu-677. The Proton donor role is filled by His-705. Ser-706 carries the post-translational modification Phosphoserine. Cys-737 contacts Zn(2+).

It belongs to the vitamin-B12 independent methionine synthase family. The cofactor is Zn(2+).

The catalysed reaction is 5-methyltetrahydropteroyltri-L-glutamate + L-homocysteine = tetrahydropteroyltri-L-glutamate + L-methionine. It functions in the pathway amino-acid biosynthesis; L-methionine biosynthesis via de novo pathway; L-methionine from L-homocysteine (MetE route): step 1/1. Catalyzes the transfer of a methyl group from 5-methyltetrahydrofolate to homocysteine resulting in methionine formation. This is 5-methyltetrahydropteroyltriglutamate--homocysteine methyltransferase (MET6) from Saccharomyces cerevisiae (strain ATCC 204508 / S288c) (Baker's yeast).